The chain runs to 317 residues: Ricin B-like lectin EULS3 (317 aa).

Residues Met-1–His-11 show a composition bias toward basic residues. Residues Met-1–Pro-157 are disordered. Residues Val-25–Pro-36 are compositionally biased toward pro residues. Over residues His-136–Gly-146 the composition is skewed to polar residues. In terms of domain architecture, Ricin B-type lectin spans Thr-168 to Phe-315.

In terms of assembly, interacts (via N-terminus) with ATS3A and ATS3B. In terms of tissue distribution, expressed in roots, rosette leaves, stems, cauline leaves and flowers.

It localises to the nucleus. Its subcellular location is the cytoplasm. Its function is as follows. Lectin which binds carbohydrates in vitro. Interacts through its lectin domain with glycan structures containing one or more Lewis X, Lewis Y or lactosamine motifs. May play a role in abiotic stress responses. May play a role in abscisic acid-induced stomatal closure. May play a role in disease resistance against Pseudomonas syringae through its involvement in stomatal movement. The sequence is that of Ricin B-like lectin EULS3 from Arabidopsis thaliana (Mouse-ear cress).